Consider the following 138-residue polypeptide: Small ribosomal subunit protein uS11c (138 aa).

Residues 1–24 (MTKPIPRIGSRRNGRIGSRKSGRR) form a disordered region. Basic residues predominate over residues 9–24 (GSRRNGRIGSRKSGRR).

The protein belongs to the universal ribosomal protein uS11 family. In terms of assembly, part of the 30S ribosomal subunit.

The protein resides in the plastid. The protein localises to the chloroplast. This chain is Small ribosomal subunit protein uS11c, found in Liriodendron tulipifera (Tuliptree).